The primary structure comprises 295 residues: Glycine N-methyltransferase (295 aa).

Valine 2 is subject to N-acetylvaline. (6S)-5-methyl-5,6,7,8-tetrahydrofolate-binding residues include serine 4 and tyrosine 6. Serine 10 carries the phosphoserine modification. 4 residues coordinate S-adenosyl-L-methionine: tyrosine 22, tryptophan 31, tyrosine 34, and arginine 41. Tyrosine 34 bears the Phosphotyrosine mark. An N6-succinyllysine modification is found at lysine 46. S-adenosyl-L-methionine-binding positions include alanine 65, 86–88 (DAS), 117–118 (NW), 139–142 (LGNS), and arginine 178. N6-succinyllysine occurs at positions 193, 198, and 203. Residue histidine 217 coordinates (6S)-5-methyl-5,6,7,8-tetrahydrofolate. Tyrosine 223 contacts S-adenosyl-L-methionine. Arginine 242 contacts (6S)-5-methyl-5,6,7,8-tetrahydrofolate.

It belongs to the class I-like SAM-binding methyltransferase superfamily. Glycine N-methyltransferase family. As to quaternary structure, homotetramer. In terms of tissue distribution, expressed only in liver, pancreas, and prostate.

It is found in the cytoplasm. The enzyme catalyses glycine + S-adenosyl-L-methionine = sarcosine + S-adenosyl-L-homocysteine + H(+). Its activity is regulated as follows. Inhibited by 5-methyltetrahydrofolate monoglutamate and by 5-methyltetrahydrofolate pentaglutamate, inhibition is much more effective by the pentaglutamate form than by the monoglutamate form. Two molecules of 5-methyltetrahydrofolate are bound per tetramer. The binding sites are localized between subunits. Inhibitor binding may preclude movements of the polypeptide chain that are necessary for enzyme activity. In terms of biological role, catalyzes the methylation of glycine by using S-adenosylmethionine (AdoMet) to form N-methylglycine (sarcosine) with the concomitant production of S-adenosylhomocysteine (AdoHcy), a reaction regulated by the binding of 5-methyltetrahydrofolate. Plays an important role in the regulation of methyl group metabolism by regulating the ratio between S-adenosyl-L-methionine and S-adenosyl-L-homocysteine. The chain is Glycine N-methyltransferase from Homo sapiens (Human).